The chain runs to 407 residues: Myeloid cell nuclear differentiation antigen (407 aa).

The 88-residue stretch at 1 to 88 (MANEYKKILL…VNNLRKERSK (88 aa)) folds into the Pyrin domain. Positions 122-211 (LTSEVGERIP…TRRNVPQKDP (90 aa)) are disordered. Residues 131 to 137 (PVAQKRK) carry the Nuclear localization signal motif. Low complexity predominate over residues 177-199 (HTSSSTPSNTSFAQNQQTQAQCQ). An HIN-200 domain is found at 196–394 (AQCQVDTRRN…CGSHSFIKVI (199 aa)).

Participates in a ternary complex with YY1 and the YY1 target DNA element. Binds nucleolin and nucleophosmin/NPM/B23.

The protein localises to the nucleus. The protein resides in the cytoplasm. Functionally, may act as a transcriptional activator/repressor in the myeloid lineage. Plays a role in the granulocyte/monocyte cell-specific response to interferon. Stimulates the DNA binding of the transcriptional repressor protein YY1. This Macaca fascicularis (Crab-eating macaque) protein is Myeloid cell nuclear differentiation antigen (MNDA).